Reading from the N-terminus, the 286-residue chain is General stress protein 39 (286 aa).

The interval Met-1–Ser-26 is disordered. Leu-46–Ala-70 serves as a coordination point for NAD(+). Ser-178 contacts substrate. Tyr-191 serves as the catalytic Proton acceptor.

Belongs to the short-chain dehydrogenases/reductases (SDR) family.

The chain is General stress protein 39 (ydaD) from Bacillus subtilis (strain 168).